A 647-amino-acid polypeptide reads, in one-letter code: Protein arginine N-methyltransferase 7 (647 aa).

SAM-dependent MTase PRMT-type domains follow at residues 12–332 (EREW…FSLW) and 337–647 (GKDK…SEDS). Catalysis depends on residues Glu140 and Glu149.

Belongs to the class I-like SAM-binding methyltransferase superfamily. Protein arginine N-methyltransferase family. PRMT7 subfamily.

Arginine methyltransferase that can both catalyze the formation of omega-N monomethylarginine (MMA) and symmetrical dimethylarginine (sDMA). The sequence is that of Protein arginine N-methyltransferase 7 (prmt-7) from Caenorhabditis elegans.